The following is a 286-amino-acid chain: Probable alpha-ketoglutarate-dependent hypophosphite dioxygenase (286 aa).

It belongs to the PhyH family.

Required for hypophosphite oxidation. This Stutzerimonas stutzeri (Pseudomonas stutzeri) protein is Probable alpha-ketoglutarate-dependent hypophosphite dioxygenase (htxA).